The primary structure comprises 278 residues: Rhamnulose-1-phosphate aldolase (278 aa).

The active site involves Glu-116. Positions 139, 141, and 210 each coordinate Zn(2+).

It belongs to the aldolase class II family. RhaD subfamily. It depends on Zn(2+) as a cofactor.

The protein resides in the cytoplasm. It carries out the reaction L-rhamnulose 1-phosphate = (S)-lactaldehyde + dihydroxyacetone phosphate. The protein operates within carbohydrate degradation; L-rhamnose degradation; glycerone phosphate from L-rhamnose: step 3/3. Functionally, catalyzes the reversible cleavage of L-rhamnulose-1-phosphate to dihydroxyacetone phosphate (DHAP) and L-lactaldehyde. The chain is Rhamnulose-1-phosphate aldolase from Listeria welshimeri serovar 6b (strain ATCC 35897 / DSM 20650 / CCUG 15529 / CIP 8149 / NCTC 11857 / SLCC 5334 / V8).